Consider the following 121-residue polypeptide: uncharacterized protein (121 aa).

3 helical membrane passes run 12 to 32 (MIGI…HPGV), 35 to 55 (VIQP…FGGL), and 67 to 87 (VFVV…YVGD).

The protein belongs to the sbp family.

It localises to the cell membrane. This is an uncharacterized protein from Mycobacterium bovis (strain ATCC BAA-935 / AF2122/97).